Here is a 204-residue protein sequence, read N- to C-terminus: Translation initiation factor IF-3 (204 aa).

Residues 169-204 are disordered; sequence VPKAAPKRDSGRSESAQEAPTARSAEASRPEAPANA.

This sequence belongs to the IF-3 family. As to quaternary structure, monomer.

The protein localises to the cytoplasm. Functionally, IF-3 binds to the 30S ribosomal subunit and shifts the equilibrium between 70S ribosomes and their 50S and 30S subunits in favor of the free subunits, thus enhancing the availability of 30S subunits on which protein synthesis initiation begins. This is Translation initiation factor IF-3 from Deinococcus geothermalis (strain DSM 11300 / CIP 105573 / AG-3a).